Here is a 213-residue protein sequence, read N- to C-terminus: ATP phosphoribosyltransferase (213 aa).

Belongs to the ATP phosphoribosyltransferase family. Short subfamily. As to quaternary structure, heteromultimer composed of HisG and HisZ subunits.

The protein localises to the cytoplasm. It carries out the reaction 1-(5-phospho-beta-D-ribosyl)-ATP + diphosphate = 5-phospho-alpha-D-ribose 1-diphosphate + ATP. The protein operates within amino-acid biosynthesis; L-histidine biosynthesis; L-histidine from 5-phospho-alpha-D-ribose 1-diphosphate: step 1/9. Catalyzes the condensation of ATP and 5-phosphoribose 1-diphosphate to form N'-(5'-phosphoribosyl)-ATP (PR-ATP). Has a crucial role in the pathway because the rate of histidine biosynthesis seems to be controlled primarily by regulation of HisG enzymatic activity. The chain is ATP phosphoribosyltransferase from Synechococcus sp. (strain RCC307).